A 549-amino-acid polypeptide reads, in one-letter code: Probable protein kinase UbiB (549 aa).

Residues 123–501 (DFDDTPLASA…QQKAHKSNYL (379 aa)) enclose the Protein kinase domain. Residues 129-137 (LASASISQV) and lysine 152 each bind ATP. Aspartate 287 acts as the Proton acceptor in catalysis. 2 consecutive transmembrane segments (helical) span residues 498-518 (SNYL…LLNQ) and 520-540 (ATLW…VLGW).

It belongs to the ABC1 family. UbiB subfamily.

It is found in the cell inner membrane. It participates in cofactor biosynthesis; ubiquinone biosynthesis [regulation]. Its function is as follows. Is probably a protein kinase regulator of UbiI activity which is involved in aerobic coenzyme Q (ubiquinone) biosynthesis. This is Probable protein kinase UbiB from Shewanella pealeana (strain ATCC 700345 / ANG-SQ1).